A 288-amino-acid polypeptide reads, in one-letter code: MAKLYKATGINLKAMALGESDRLLTILTPEYGLIRVVAPGVRKQKSKLGGRGELFVVNQLLISKGRSLDRINQAETITSYTGLSQNLGKLAAGQYLAELVQQIALKENPQTELFHLLNEHLERIEQLQHKTDRLWSTQLIAFLAHGIYHLLAIEGIAPQVHQCCATGNELQPDFNNSKWQVGFSIDAGGIIKVDETSVVQSFCKDLSDYYLSTKINTLINANQLSLLQQLPQPQLQTIVKLTSYQDWVKVEQLLRKYTQYHLGYSIRSAELIDTYLKSISPLINNATI.

It belongs to the RecO family.

In terms of biological role, involved in DNA repair and RecF pathway recombination. This chain is DNA repair protein RecO, found in Trichodesmium erythraeum (strain IMS101).